Reading from the N-terminus, the 37-residue chain is Esculentin-2P (37 aa).

A disulfide bridge links Cys-31 with Cys-37.

In terms of tissue distribution, expressed by the skin glands.

It localises to the secreted. In terms of biological role, antibacterial activity against Gram-negative bacterium E.coli. This is Esculentin-2P from Lithobates pipiens (Northern leopard frog).